A 316-amino-acid polypeptide reads, in one-letter code: Pantothenate kinase (316 aa).

95–102 contacts ATP; sequence GSVAVGKS.

It belongs to the prokaryotic pantothenate kinase family.

The protein resides in the cytoplasm. The enzyme catalyses (R)-pantothenate + ATP = (R)-4'-phosphopantothenate + ADP + H(+). Its pathway is cofactor biosynthesis; coenzyme A biosynthesis; CoA from (R)-pantothenate: step 1/5. This chain is Pantothenate kinase, found in Sodalis glossinidius (strain morsitans).